Reading from the N-terminus, the 493-residue chain is Cytochrome P450 2A9 (493 aa).

Cys438 serves as a coordination point for heme.

It belongs to the cytochrome P450 family. It depends on heme as a cofactor. In terms of tissue distribution, liver.

It localises to the endoplasmic reticulum membrane. The protein localises to the microsome membrane. The catalysed reaction is an organic molecule + reduced [NADPH--hemoprotein reductase] + O2 = an alcohol + oxidized [NADPH--hemoprotein reductase] + H2O + H(+). Functionally, cytochromes P450 are a group of heme-thiolate monooxygenases. In liver microsomes, this enzyme is involved in an NADPH-dependent electron transport pathway. It oxidizes a variety of structurally unrelated compounds, including steroids, fatty acids, and xenobiotics. In Mesocricetus auratus (Golden hamster), this protein is Cytochrome P450 2A9 (CYP2A9).